The chain runs to 404 residues: MEAGEEPLLLAELKPGRPHQFDWKSSCETWSVAFSPDGSWFAWSQGHCIVKLIPWPLEEQFIPKGFEAKSRSSKNETKGRGSPKEKTLDCGQIVWGLAFSPWPSPPSRKLWARHHPQVPDVSCLVLATGLNDGQIKIWEVQTGLLLLNLSGHQDVVRDLSFTPSGSLILVSASRDKTLRIWDLNKHGKQIQVLSGHLQWVYCCSISPDCSMLCSAAGEKSVFLWSMRSYTLIRKLEGHQSSVVSCDFSPDSALLVTASYDTNVIMWDPYTGERLRSLHHTQVDPAMDDSDVHISSLRSVCFSPEGLYLATVADDRLLRIWALELKTPIAFAPMTNGLCCTFFPHGGVIATGTRDGHVQFWTAPRVLSSLKHLCRKALRSFLTTYQVLALPIPKKMKEFLTYRTF.

WD repeat units lie at residues 16 to 55, 81 to 140, 144 to 183, 188 to 226, 230 to 268, 283 to 322, and 325 to 362; these read GRPH…LIPW, GSPK…IWEV, LLLL…IWDL, KQIQ…LWSM, TLIR…MWDP, DPAM…IWAL, and KTPI…FWTA. Positions 68–87 are disordered; the sequence is AKSRSSKNETKGRGSPKEKT. Residues 356 to 404 enclose the SOCS box domain; it reads HVQFWTAPRVLSSLKHLCRKALRSFLTTYQVLALPIPKKMKEFLTYRTF.

The protein operates within protein modification; protein ubiquitination. Its function is as follows. May be a substrate-recognition component of a SCF-like ECS (Elongin-Cullin-SOCS-box protein) E3 ubiquitin ligase complex which mediates the ubiquitination and subsequent proteasomal degradation of target proteins. This chain is WD repeat and SOCS box-containing protein 2 (WSB2), found in Homo sapiens (Human).